Reading from the N-terminus, the 182-residue chain is Crossover junction endodeoxyribonuclease RuvC (182 aa).

Active-site residues include D7, E69, and D141. Mg(2+) is bound by residues D7, E69, and D141.

Belongs to the RuvC family. In terms of assembly, homodimer which binds Holliday junction (HJ) DNA. The HJ becomes 2-fold symmetrical on binding to RuvC with unstacked arms; it has a different conformation from HJ DNA in complex with RuvA. In the full resolvosome a probable DNA-RuvA(4)-RuvB(12)-RuvC(2) complex forms which resolves the HJ. The cofactor is Mg(2+).

Its subcellular location is the cytoplasm. The enzyme catalyses Endonucleolytic cleavage at a junction such as a reciprocal single-stranded crossover between two homologous DNA duplexes (Holliday junction).. In terms of biological role, the RuvA-RuvB-RuvC complex processes Holliday junction (HJ) DNA during genetic recombination and DNA repair. Endonuclease that resolves HJ intermediates. Cleaves cruciform DNA by making single-stranded nicks across the HJ at symmetrical positions within the homologous arms, yielding a 5'-phosphate and a 3'-hydroxyl group; requires a central core of homology in the junction. The consensus cleavage sequence is 5'-(A/T)TT(C/G)-3'. Cleavage occurs on the 3'-side of the TT dinucleotide at the point of strand exchange. HJ branch migration catalyzed by RuvA-RuvB allows RuvC to scan DNA until it finds its consensus sequence, where it cleaves and resolves the cruciform DNA. The protein is Crossover junction endodeoxyribonuclease RuvC of Paracidovorax citrulli (strain AAC00-1) (Acidovorax citrulli).